The chain runs to 374 residues: dTDP-3-amino-3,4,6-trideoxy-alpha-D-glucose transaminase (374 aa).

Residues glycine 60, glutamine 160, 181–186, tyrosine 214, tyrosine 221, 229–231, and tyrosine 316 contribute to the pyridoxal 5'-phosphate site; these read SFYPTK and NSR. Lysine 186 carries the N6-(pyridoxal phosphate)lysine modification.

This sequence belongs to the degT/dnrJ/eryC1 family. Pyridoxal 5'-phosphate serves as cofactor.

It carries out the reaction dTDP-3-amino-3,4,6-trideoxy-alpha-D-glucose + 2-oxoglutarate = dTDP-3-dehydro-4,6-dideoxy-alpha-D-glucose + L-glutamate. It functions in the pathway antibiotic biosynthesis. Functionally, involved in the biosynthesis of the amino sugar dTDP-L-megosamine which is found in the macrolide antibiotic and antiparasitic megalomicin A. Catalyzes the reversible transfer of the amino group from L-glutamate to the C-3 position of dTDP-3-keto-4,6-deoxyglucose to yield dTDP-3-amino-3,4,6-trideoxyglucose. The polypeptide is dTDP-3-amino-3,4,6-trideoxy-alpha-D-glucose transaminase (Micromonospora megalomicea subsp. nigra).